The primary structure comprises 136 residues: Large ribosomal subunit protein uL16 (136 aa).

This sequence belongs to the universal ribosomal protein uL16 family. Part of the 50S ribosomal subunit.

Binds 23S rRNA and is also seen to make contacts with the A and possibly P site tRNAs. This Hamiltonella defensa subsp. Acyrthosiphon pisum (strain 5AT) protein is Large ribosomal subunit protein uL16.